The primary structure comprises 718 residues: Kinesin-2a (718 aa).

The region spanning 5–335 (NIKVIVRCRP…LRYADRAKQI (331 aa)) is the Kinesin motor domain. Residue 97-104 (GQTGAGKT) participates in ATP binding. ADP-binding residues include Gly-100, Gly-102, Lys-103, Thr-104, and Trp-105. Position 104 (Thr-104) interacts with Mg(2+). A coiled-coil region spans residues 432-477 (SRKAADELEAKRRALAEAKQKRESELEQKEALNKEAIVTLTDLKSQ).

This sequence belongs to the TRAFAC class myosin-kinesin ATPase superfamily. Kinesin family. Kinesin II subfamily. As to quaternary structure, monomer.

Its subcellular location is the cell projection. The protein resides in the cilium. It is found in the flagellum. The protein localises to the cytoplasm. It localises to the cytoskeleton. Its subcellular location is the flagellum axoneme. The protein resides in the flagellum basal body. Functionally, involved in anterograde intraflagellar transport (IFT). Involved in flagellar assembly. In Giardia intestinalis (strain ATCC 50803 / WB clone C6) (Giardia lamblia), this protein is Kinesin-2a.